The following is a 227-amino-acid chain: Ribosomal RNA large subunit methyltransferase E (227 aa).

Glycine 78, tryptophan 80, aspartate 103, aspartate 119, and aspartate 143 together coordinate S-adenosyl-L-methionine. Lysine 183 serves as the catalytic Proton acceptor.

It belongs to the class I-like SAM-binding methyltransferase superfamily. RNA methyltransferase RlmE family.

The protein resides in the cytoplasm. The catalysed reaction is uridine(2552) in 23S rRNA + S-adenosyl-L-methionine = 2'-O-methyluridine(2552) in 23S rRNA + S-adenosyl-L-homocysteine + H(+). Functionally, specifically methylates the uridine in position 2552 of 23S rRNA at the 2'-O position of the ribose in the fully assembled 50S ribosomal subunit. The sequence is that of Ribosomal RNA large subunit methyltransferase E from Rickettsia canadensis (strain McKiel).